The primary structure comprises 1390 residues: DNA-directed RNA polymerase subunit beta (1390 aa).

This sequence belongs to the RNA polymerase beta chain family. The RNAP catalytic core consists of 2 alpha, 1 beta, 1 beta' and 1 omega subunit. When a sigma factor is associated with the core the holoenzyme is formed, which can initiate transcription.

It carries out the reaction RNA(n) + a ribonucleoside 5'-triphosphate = RNA(n+1) + diphosphate. Its function is as follows. DNA-dependent RNA polymerase catalyzes the transcription of DNA into RNA using the four ribonucleoside triphosphates as substrates. The sequence is that of DNA-directed RNA polymerase subunit beta from Rhodopseudomonas palustris (strain HaA2).